A 430-amino-acid polypeptide reads, in one-letter code: Tol-Pal system protein TolB (430 aa).

The signal sequence occupies residues 1–21 (MKQALRVAFGFLILWASVLHA).

The protein belongs to the TolB family. The Tol-Pal system is composed of five core proteins: the inner membrane proteins TolA, TolQ and TolR, the periplasmic protein TolB and the outer membrane protein Pal. They form a network linking the inner and outer membranes and the peptidoglycan layer.

The protein resides in the periplasm. Part of the Tol-Pal system, which plays a role in outer membrane invagination during cell division and is important for maintaining outer membrane integrity. TolB occupies a key intermediary position in the Tol-Pal system because it communicates directly with both membrane-embedded components, Pal in the outer membrane and TolA in the inner membrane. In Shigella flexneri, this protein is Tol-Pal system protein TolB.